The chain runs to 160 residues: Putative lipoprotein YfiB (160 aa).

A signal peptide spans 1–18 (MIKHLVAPLVFTSLILTG). A lipid anchor (N-palmitoyl cysteine) is attached at C19. C19 is lipidated: S-diacylglycerol cysteine. Positions 43–160 (AGDWSLGLSD…RRVAVVITTP (118 aa)) constitute an OmpA-like domain.

Belongs to the outer membrane OOP (TC 1.B.6) superfamily.

It is found in the cell membrane. This Escherichia coli (strain K12) protein is Putative lipoprotein YfiB (yfiB).